We begin with the raw amino-acid sequence, 294 residues long: Elongation factor Ts (294 aa).

The segment at Thr81 to Val84 is involved in Mg(2+) ion dislocation from EF-Tu.

The protein belongs to the EF-Ts family.

Its subcellular location is the cytoplasm. In terms of biological role, associates with the EF-Tu.GDP complex and induces the exchange of GDP to GTP. It remains bound to the aminoacyl-tRNA.EF-Tu.GTP complex up to the GTP hydrolysis stage on the ribosome. This chain is Elongation factor Ts (tsf), found in Mycoplasmopsis pulmonis (strain UAB CTIP) (Mycoplasma pulmonis).